The chain runs to 202 residues: Securin (202 aa).

The disordered stretch occupies residues 36–55 (DGRSQVSTPHVGKMFDAPPA). The D-box signature appears at 61–64 (RKAL). 2 consecutive short sequence motifs (TEK-box) follow at residues 71–73 (TEK) and 94–96 (TEK). The short motif at 163–173 (PPSPLKMPPLL) is the SH3-binding element. A Phosphoserine; by CDK1 modification is found at Ser165.

It belongs to the securin family. As to quaternary structure, interacts with RPS10 and DNAJA1. Interacts with the caspase-like ESPL1, and prevents its protease activity probably by covering its active site. Interacts with TP53 and blocks its activity probably by blocking its binding to DNA. Interacts with the Ku 70 kDa subunit of ds-DNA kinase. Interacts with PTTG1IP. In terms of processing, phosphorylated at Ser-165 by CDK1 during mitosis. Phosphorylated in vitro by ds-DNA kinase. Post-translationally, ubiquitinated through 'Lys-11' linkage of ubiquitin moieties by the anaphase promoting complex (APC) at the onset of anaphase, conducting to its degradation. 'Lys-11'-linked ubiquitination is mediated by the E2 ligase UBE2C/UBCH10.

Its subcellular location is the cytoplasm. It is found in the nucleus. Its function is as follows. Regulatory protein, which plays a central role in chromosome stability, in the p53/TP53 pathway, and DNA repair. Probably acts by blocking the action of key proteins. During the mitosis, it blocks Separase/ESPL1 function, preventing the proteolysis of the cohesin complex and the subsequent segregation of the chromosomes. At the onset of anaphase, it is ubiquitinated, conducting to its destruction and to the liberation of ESPL1. Its function is however not limited to a blocking activity, since it is required to activate ESPL1. Negatively regulates the transcriptional activity and related apoptosis activity of TP53. The negative regulation of TP53 may explain the strong transforming capability of the protein when it is overexpressed. May also play a role in DNA repair via its interaction with Ku, possibly by connecting DNA damage-response pathways with sister chromatid separation. This Bos taurus (Bovine) protein is Securin (PTTG1).